A 431-amino-acid chain; its full sequence is Adenylosuccinate synthetase (431 aa).

Residues 13–19 (GDEGKGK) and 41–43 (GHT) each bind GTP. The active-site Proton acceptor is the Asp-14. Mg(2+) contacts are provided by Asp-14 and Gly-41. IMP is bound by residues 14 to 17 (DEGK), 39 to 42 (NAGH), Thr-130, Arg-144, Gln-225, Thr-240, and Arg-304. His-42 (proton donor) is an active-site residue. 300-306 (ATTGRKR) provides a ligand contact to substrate. GTP is bound by residues Arg-306, 332-334 (KLD), and 415-417 (STG).

Belongs to the adenylosuccinate synthetase family. As to quaternary structure, homodimer. Mg(2+) is required as a cofactor.

The protein resides in the cytoplasm. It carries out the reaction IMP + L-aspartate + GTP = N(6)-(1,2-dicarboxyethyl)-AMP + GDP + phosphate + 2 H(+). It functions in the pathway purine metabolism; AMP biosynthesis via de novo pathway; AMP from IMP: step 1/2. Its function is as follows. Plays an important role in the de novo pathway of purine nucleotide biosynthesis. Catalyzes the first committed step in the biosynthesis of AMP from IMP. This is Adenylosuccinate synthetase from Shewanella amazonensis (strain ATCC BAA-1098 / SB2B).